The sequence spans 166 residues: NADPH-dependent 7-cyano-7-deazaguanine reductase (166 aa).

Catalysis depends on Cys-57, which acts as the Thioimide intermediate. Asp-64 acts as the Proton donor in catalysis. Substrate is bound by residues 79 to 81 (VES) and 98 to 99 (HE).

This sequence belongs to the GTP cyclohydrolase I family. QueF type 1 subfamily.

The protein resides in the cytoplasm. The enzyme catalyses 7-aminomethyl-7-carbaguanine + 2 NADP(+) = 7-cyano-7-deazaguanine + 2 NADPH + 3 H(+). Its pathway is tRNA modification; tRNA-queuosine biosynthesis. Catalyzes the NADPH-dependent reduction of 7-cyano-7-deazaguanine (preQ0) to 7-aminomethyl-7-deazaguanine (preQ1). This chain is NADPH-dependent 7-cyano-7-deazaguanine reductase, found in Staphylococcus epidermidis (strain ATCC 35984 / DSM 28319 / BCRC 17069 / CCUG 31568 / BM 3577 / RP62A).